Reading from the N-terminus, the 121-residue chain is Large ribosomal subunit protein bL20 (121 aa).

This sequence belongs to the bacterial ribosomal protein bL20 family.

Functionally, binds directly to 23S ribosomal RNA and is necessary for the in vitro assembly process of the 50S ribosomal subunit. It is not involved in the protein synthesizing functions of that subunit. The protein is Large ribosomal subunit protein bL20 of Koribacter versatilis (strain Ellin345).